Reading from the N-terminus, the 582-residue chain is MNPINLVQLLFFLSVLLVLSWPLGLYAARVYQGQPCVMDKILGPLERLLYRISGVDASREMDWKIYALVMLGLNAFGMVFVYVLERLQGGLPLNPLHLPGVDPFVAVNTAVSFATNTNWQAYAGESTMSILTQMLGLAVQNFLSAATGMAVAVALIRGLARRETTHLGNFWQDLTRSVLYILLPLSFVLALLLVWQGVPQTFTGQVEADWLDPAPHVAESISPDTPSTDQPPAKQTIVLGPVASQVAIKQLGTNGGGYFNVNSAHPLENPTPLTNLLEMLAILLIPAALCHTFGVMIGDRRQGLAILAAMTILFAGFAALTLAAESVPNPTLSGIGVPAVPSLEGKEVRFGTAGSALWAAATTAASNGSVNAMHDSFSPLGGMWPMLLMQLGEVVYGGVGSGLYGMLVFAVVTVFVAGLMVGRTPEYCGKKIEPFETKMAALVILIPPFLCLAGTALAAVIGPADAVSNPGPHGFSQMLYAFSSMGNNNGSAFAGLTATSPFWTIAGAVAMFVSRYWLIVPVLALAGSLAGKKRLAQGPGTLPTHGGIFVALLIIVVLVVGALTFVPALALGPIAEQLALFQ.

The next 11 helical transmembrane spans lie at 6–26 (LVQL…LGLY), 65–85 (IYAL…YVLE), 87–107 (LQGG…FVAV), 136–156 (GLAV…VALI), 178–198 (VLYI…WQGV), 277–297 (LEML…GVMI), 304–324 (LAIL…TLAA), 402–422 (GLYG…LMVG), 441–461 (ALVI…AAVI), 505–525 (IAGA…VLAL), and 546–566 (GGIF…LTFV).

Belongs to the KdpA family. As to quaternary structure, the system is composed of three essential subunits: KdpA, KdpB and KdpC.

The protein resides in the cell inner membrane. Its function is as follows. Part of the high-affinity ATP-driven potassium transport (or Kdp) system, which catalyzes the hydrolysis of ATP coupled with the electrogenic transport of potassium into the cytoplasm. This subunit binds the periplasmic potassium ions and delivers the ions to the membrane domain of KdpB through an intramembrane tunnel. The protein is Potassium-transporting ATPase potassium-binding subunit of Solidesulfovibrio magneticus (strain ATCC 700980 / DSM 13731 / RS-1) (Desulfovibrio magneticus).